A 60-amino-acid chain; its full sequence is Cytotoxin 2 (60 aa).

4 disulfide bridges follow: Cys3–Cys21, Cys14–Cys38, Cys42–Cys53, and Cys54–Cys59.

The protein belongs to the three-finger toxin family. Short-chain subfamily. Type IA cytotoxin sub-subfamily. In terms of assembly, monomer in solution; Homodimer and oligomer in the presence of negatively charged lipids forming a pore with a size ranging between 20 and 30 Angstroms. Expressed by the venom gland.

The protein resides in the secreted. The protein localises to the target cell membrane. Functionally, shows cytolytic activity on many different cells by forming pore in lipid membranes. In vivo, increases heart rate or kills the animal by cardiac arrest. In addition, it binds to heparin with high affinity, interacts with Kv channel-interacting protein 1 (KCNIP1) in a calcium-independent manner, and binds to integrin alpha-V/beta-3 (ITGAV/ITGB3) with moderate affinity. The sequence is that of Cytotoxin 2 from Naja nivea (Cape cobra).